Consider the following 257-residue polypeptide: Triosephosphate isomerase (257 aa).

Positions 11 and 13 each coordinate substrate. H96 (electrophile) is an active-site residue. The Proton acceptor role is filled by E170.

This sequence belongs to the triosephosphate isomerase family. In terms of assembly, homodimer.

The catalysed reaction is D-glyceraldehyde 3-phosphate = dihydroxyacetone phosphate. Its pathway is carbohydrate biosynthesis; gluconeogenesis. It functions in the pathway carbohydrate degradation; glycolysis; D-glyceraldehyde 3-phosphate from glycerone phosphate: step 1/1. The protein is Triosephosphate isomerase of Giardia intestinalis (Giardia lamblia).